A 113-amino-acid polypeptide reads, in one-letter code: Mitochondrial import inner membrane translocase subunit PAM16 like 1 (113 aa).

The transit peptide at 1-48 (MAARVLASVIVMGSGIIARACTQAYRQALANASKTGVAHEATQTIKRG) directs the protein to the mitochondrion. Residues 55–104 (EARQILGVTEKSSWDEILKKYDTLFERNAQNGSFYLQSKVHRAKECLETA) form a J-like region.

This sequence belongs to the TIM16/PAM16 family. Expressed at low levels in seedlings, rosettes and inflorescence.

The protein resides in the mitochondrion inner membrane. In terms of biological role, regulates ATP-dependent protein translocation into the mitochondrial matrix. The chain is Mitochondrial import inner membrane translocase subunit PAM16 like 1 from Arabidopsis thaliana (Mouse-ear cress).